We begin with the raw amino-acid sequence, 276 residues long: 2-dehydro-3-deoxyphosphooctonate aldolase (276 aa).

It belongs to the KdsA family.

It is found in the cytoplasm. It carries out the reaction D-arabinose 5-phosphate + phosphoenolpyruvate + H2O = 3-deoxy-alpha-D-manno-2-octulosonate-8-phosphate + phosphate. Its pathway is carbohydrate biosynthesis; 3-deoxy-D-manno-octulosonate biosynthesis; 3-deoxy-D-manno-octulosonate from D-ribulose 5-phosphate: step 2/3. It participates in bacterial outer membrane biogenesis; lipopolysaccharide biosynthesis. This is 2-dehydro-3-deoxyphosphooctonate aldolase from Xylella fastidiosa (strain M23).